Reading from the N-terminus, the 495-residue chain is MNINVAAFRTPPTKQTDHADQILGTDSESRRVFRNAMLQAIDMVVDQTAAASSLYSGTSFQGLRGLIDDLDPLPEVGTGIAAALAEIGRPALEHAMVVGHPAAMAHLHCPVAVPALAAEVLISATNQSLDSWDQSPFATLVEERVLACLTQLAELPASASGNFTSGGTQSNMTALYLAAVRCGPDARKAGVVLTSAHAHFSIRKSAAILGFAEDAVIAIAADADGRMSVPALKAELLRVAGEGRIPVAVVATAGTTDLGAIDPLVEIADLAAAQNVWMHVDAAYGGGLLFSRHRSRLEGLEHAHSITLDFHKMLFQPISCGVLLLRDRADFAPLASKADYLNPEDAVFADAPNLVERSMQTTRRADALKILMTMRAIGRDGLDALICQTLQNTHAAAEAVKTREYLSLAGPPSLSTVLFRYVSARGPKFADAITLKTRAALFNAGIAALATTVLDGRVHFKLTLLNPRSTPDVVHRILDAIGETARELETHHARP.

N6-(pyridoxal phosphate)lysine is present on Lys312.

Belongs to the group II decarboxylase family. The cofactor is pyridoxal 5'-phosphate.

The catalysed reaction is L-2,4-diaminobutanoate + H(+) = propane-1,3-diamine + CO2. The protein operates within siderophore biosynthesis; rhizobactin biosynthesis. The chain is L-2,4-diaminobutyrate decarboxylase (rhbB) from Rhizobium meliloti (strain 1021) (Ensifer meliloti).